A 457-amino-acid chain; its full sequence is MKKLWGGRFQKTPEKWVDEFGASIHFDKQLVKEDLTGSLAHASMLNTCGILDDEEAATIKDGLNKLMKKAEADELEFSVDYEDIHLNLEKMLIDEIGPLGGKLHTARSRNDQVATDMHLYLNNQVEHIIELISSFQTVLVEKAEQHVETIFPGYTHLQRAQPISFAHHMLAYFWMLERDKARFQDSLKRINVSPLGCGALAGTTFPIDREYTAELLGFDHIYENSLDGVSDRDFILEFLSNSSLVMMHLSRLCEEIILWCSQEFKFIELDDTYATGSSMMPQKKNPDMAELIRGKTGRVYGNLMGLLTIMKGLPLTYNKDLQEDKEGMFDTVKTIAGSLQIFTGMIQTMTVNEDVMKKATKEDFSNATEVADYLAKKGMPFREAHEIVGKLVYTCIQEGIYLSDLPFETFTEASDLFEEDIYTVLDPYVAVEKRTSAGGTGFKQIQLALEKAKACLA.

It belongs to the lyase 1 family. Argininosuccinate lyase subfamily.

It localises to the cytoplasm. It catalyses the reaction 2-(N(omega)-L-arginino)succinate = fumarate + L-arginine. It participates in amino-acid biosynthesis; L-arginine biosynthesis; L-arginine from L-ornithine and carbamoyl phosphate: step 3/3. This is Argininosuccinate lyase from Bacillus pumilus (strain SAFR-032).